Consider the following 336-residue polypeptide: MKIVFWGTPKYAAENLKTIAKAGYEVIAVVTQPDRKRGRGKKLSPSPVKEAAEELSIPVYATNSISKDQKTKEILLNLKADVYLVVAFGQILPKEILDQPKLGCWNSHASLLPVWRGAAPIQWSIINADAKTGICIMSMEEGLDTGPVIEQESTVIKDSDNLEILTNRLSVMSSKLLLKSLEKIKLTKGLNKSSRLKQLNAIEQRNLNGIPSYARQITKEDNLIDWNQDARKILKKIQGLYPNAYTLYNGKRIKILDAIISCDNNQSKESQDIKNQSKSNRIPGEIFMINKQIGIKIMTNDFPVLIKYAQLEGKKATDSYTLSIQSNLSINDKLGI.

Residue 110-113 participates in (6S)-5,6,7,8-tetrahydrofolate binding; that stretch reads SLLP.

The protein belongs to the Fmt family.

The catalysed reaction is L-methionyl-tRNA(fMet) + (6R)-10-formyltetrahydrofolate = N-formyl-L-methionyl-tRNA(fMet) + (6S)-5,6,7,8-tetrahydrofolate + H(+). Attaches a formyl group to the free amino group of methionyl-tRNA(fMet). The formyl group appears to play a dual role in the initiator identity of N-formylmethionyl-tRNA by promoting its recognition by IF2 and preventing the misappropriation of this tRNA by the elongation apparatus. The protein is Methionyl-tRNA formyltransferase of Prochlorococcus marinus (strain NATL2A).